Consider the following 448-residue polypeptide: Fibulin-5 (448 aa).

Positions 1–23 (MPGIKRILTVTILALCLPSPGNA) are cleaved as a signal peptide. Residues 42 to 82 (DIDECRTIPEACRGDMMCVNQNGRYLCIPRTNPVYRGPYSN) form the EGF-like 1; calcium-binding domain. Disulfide bonds link cysteine 46–cysteine 59, cysteine 53–cysteine 68, cysteine 131–cysteine 144, cysteine 138–cysteine 153, cysteine 155–cysteine 166, cysteine 172–cysteine 181, cysteine 177–cysteine 190, cysteine 192–cysteine 205, cysteine 211–cysteine 221, cysteine 217–cysteine 230, cysteine 232–cysteine 245, cysteine 251–cysteine 262, cysteine 258–cysteine 271, cysteine 273–cysteine 286, cysteine 292–cysteine 305, cysteine 299–cysteine 314, and cysteine 320–cysteine 332. The Cell attachment site motif lies at 54-56 (RGD). The EGF-like 2; calcium-binding domain occupies 127-167 (DVDECATDSHQCNPTQICINTEGGYTCSCTDGYWLLEGQCL). Residues 168–206 (DIDECRYGYCQQLCANVPGSYSCTCNPGFTLNEDGRSCQ) form the EGF-like 3; calcium-binding domain. Positions 207-246 (DVNECATENPCVQTCVNTYGSFICRCDPGYELEEDGVHCS) constitute an EGF-like 4; calcium-binding domain. Positions 245–448 (CSDMDECSFS…LRIYVSQYPF (204 aa)) are interaction with LOXL1. An EGF-like 5; calcium-binding domain is found at 247–287 (DMDECSFSEFLCQHECVNQPGTYFCSCPPGYILLDDNRSCQ). N-linked (GlcNAc...) asparagine glycans are attached at residues asparagine 283 and asparagine 296. Residues 288–333 (DINECEHRNHTCNLQQTCYNLQGGFKCIDPIRCEEPYLRISDNRCM) form the EGF-like 6; calcium-binding domain.

It belongs to the fibulin family. Homodimer. Monomer, homodimerizes in presence of Ca(2+). Interacts with ELN. Interacts (via N-terminus) with the integrins ITGAV/ITGB3, ITGAV/ITGB5 and ITGA9/ITGB1. Interacts with FBN1 (via N-terminal domain). Forms a ternary complex with ELN and FBN1. Interacts with EFEMP2 with moderate affinity. Interacts with LOXL1. Post-translationally, N-glycosylated.

Its subcellular location is the secreted. The protein localises to the extracellular space. It is found in the extracellular matrix. In terms of biological role, essential for elastic fiber formation, is involved in the assembly of continuous elastin (ELN) polymer and promotes the interaction of microfibrils and ELN. Stabilizes and organizes elastic fibers in the skin, lung and vasculature. Promotes adhesion of endothelial cells through interaction of integrins and the RGD motif. Vascular ligand for integrin receptors which may play a role in vascular development and remodeling. May act as an adapter that mediates the interaction between FBN1 and ELN. The chain is Fibulin-5 (FBLN5) from Pongo abelii (Sumatran orangutan).